Consider the following 372-residue polypeptide: NAD(P)H-quinone oxidoreductase subunit 1 (372 aa).

8 helical membrane-spanning segments follow: residues 27–47, 97–117, 130–150, 176–196, 204–224, 254–274, 308–328, and 351–371; these read AIWM…GVLV, WLFL…YLIV, VGIF…LMAG, LALS…IDIV, ILGW…IAAL, FALF…VFAV, SLGI…AILL, and VSLV…FAFG.

It belongs to the complex I subunit 1 family. NDH-1 is composed of at least 11 different subunits.

The protein localises to the cellular thylakoid membrane. It carries out the reaction a plastoquinone + NADH + (n+1) H(+)(in) = a plastoquinol + NAD(+) + n H(+)(out). It catalyses the reaction a plastoquinone + NADPH + (n+1) H(+)(in) = a plastoquinol + NADP(+) + n H(+)(out). Functionally, NDH-1 shuttles electrons from an unknown electron donor, via FMN and iron-sulfur (Fe-S) centers, to quinones in the respiratory and/or the photosynthetic chain. The immediate electron acceptor for the enzyme in this species is believed to be plastoquinone. Couples the redox reaction to proton translocation, and thus conserves the redox energy in a proton gradient. The sequence is that of NAD(P)H-quinone oxidoreductase subunit 1 from Microcystis aeruginosa (strain NIES-843 / IAM M-2473).